Reading from the N-terminus, the 344-residue chain is MKDVTIIGGGPSGLYASFYAGLRDMSVRLIDVQSELGGKMRIYPEKIIWDIGGIAPKPCHEILKDTIKQGLYFKPEVHLNERVVDIRKKAERHFEVETEAGEIYTSKAVIIAIGAGIINPKQLDVKGVERYQLTNLHYVVQSYRRFKDKDVLISGGGNTALDWAHDIAKIAKSVTVVYRKEDVSGHEAMKTLVTDLNVKLCPKTRIKYLVGNDDETHISEVVLEHVESGDTHTVKFDDVIISHGFDRCNTLLSETSSKLDMHDDCRVKGFGNTTTSIPGIYACGDIVYHDAKSHLIASAFSDGANAANLAKTYIQPDANAEGYVSSHHEVFKEANKTIVNKHLY.

Residues S12, D31, K39, Y43, V83, I118, D285, and S326 each coordinate FAD.

This sequence belongs to the ferredoxin--NADP reductase type 2 family. In terms of assembly, homodimer. FAD is required as a cofactor.

It carries out the reaction 2 reduced [2Fe-2S]-[ferredoxin] + NADP(+) + H(+) = 2 oxidized [2Fe-2S]-[ferredoxin] + NADPH. This chain is Ferredoxin--NADP reductase, found in Staphylococcus aureus (strain MW2).